Reading from the N-terminus, the 90-residue chain is Putative beta-neurotoxin RjAa14F (90 aa).

The N-terminal stretch at 1–18 (MKILIFIIASFMLIGVEC) is a signal peptide. The LCN-type CS-alpha/beta domain occupies 19-89 (KEGYPTNSEG…VWDPNNNKCV (71 aa)). Intrachain disulfides connect Cys29–Cys88, Cys33–Cys62, Cys40–Cys69, and Cys44–Cys71.

It belongs to the long (4 C-C) scorpion toxin superfamily. Sodium channel inhibitor family. Beta subfamily. Expressed by the venom gland.

Its subcellular location is the secreted. Its function is as follows. Beta toxins bind voltage-independently at site-4 of sodium channels (Nav) and shift the voltage of activation toward more negative potentials thereby affecting sodium channel activation and promoting spontaneous and repetitive firing. This is Putative beta-neurotoxin RjAa14F from Rhopalurus junceus (Caribbean blue scorpion).